The sequence spans 173 residues: Ribosome maturation factor RimM (173 aa).

Positions 98–170 (EGEFYWCDLI…IMTVSPTEGL (73 aa)) constitute a PRC barrel domain.

This sequence belongs to the RimM family. In terms of assembly, binds ribosomal protein uS19.

The protein localises to the cytoplasm. Functionally, an accessory protein needed during the final step in the assembly of 30S ribosomal subunit, possibly for assembly of the head region. Essential for efficient processing of 16S rRNA. May be needed both before and after RbfA during the maturation of 16S rRNA. It has affinity for free ribosomal 30S subunits but not for 70S ribosomes. The protein is Ribosome maturation factor RimM of Geobacter metallireducens (strain ATCC 53774 / DSM 7210 / GS-15).